The following is a 361-amino-acid chain: Methylthioribose-1-phosphate isomerase (361 aa).

Residue D245 is the Proton donor of the active site.

This sequence belongs to the eIF-2B alpha/beta/delta subunits family. MtnA subfamily.

The protein resides in the cytoplasm. Its subcellular location is the nucleus. The catalysed reaction is 5-(methylsulfanyl)-alpha-D-ribose 1-phosphate = 5-(methylsulfanyl)-D-ribulose 1-phosphate. Its pathway is amino-acid biosynthesis; L-methionine biosynthesis via salvage pathway; L-methionine from S-methyl-5-thio-alpha-D-ribose 1-phosphate: step 1/6. Functionally, catalyzes the interconversion of methylthioribose-1-phosphate (MTR-1-P) into methylthioribulose-1-phosphate (MTRu-1-P). The polypeptide is Methylthioribose-1-phosphate isomerase (Monosiga brevicollis (Choanoflagellate)).